Consider the following 203-residue polypeptide: Ras-like protein 1 (203 aa).

A GTP-binding site is contributed by Gly-17 to Ser-24. Positions Tyr-39–Tyr-47 match the Effector region motif. Residues Asp-64–Gln-68 and Asn-123–Asp-126 contribute to the GTP site. Cysteine methyl ester is present on Cys-200. Cys-200 is lipidated: S-farnesyl cysteine. The propeptide at Ile-201–Met-203 is removed in mature form.

This sequence belongs to the small GTPase superfamily. Ras family.

Its subcellular location is the cell membrane. The enzyme catalyses GTP + H2O = GDP + phosphate + H(+). With respect to regulation, alternates between an inactive form bound to GDP and an active form bound to GTP. Activated by a guanine nucleotide-exchange factor (GEF) and inactivated by a GTPase-activating protein (GAP). The chain is Ras-like protein 1 (RAS1) from Mucor circinelloides f. lusitanicus (Mucor racemosus var. lusitanicus).